Here is a 180-residue protein sequence, read N- to C-terminus: uncharacterized protein (180 aa).

This is an uncharacterized protein from Clostridium acetobutylicum (strain ATCC 824 / DSM 792 / JCM 1419 / IAM 19013 / LMG 5710 / NBRC 13948 / NRRL B-527 / VKM B-1787 / 2291 / W).